The chain runs to 848 residues: Beta-galactosidase 11 (848 aa).

The first 23 residues, 1-23 (MSAAAVLAVVAAAVAALAAAASG), serve as a signal peptide directing secretion. A glycan (N-linked (GlcNAc...) asparagine) is linked at Asn29. Glu189 serves as the catalytic Proton donor. Residue Glu260 is the Nucleophile of the active site. 3 N-linked (GlcNAc...) asparagine glycosylation sites follow: Asn261, Asn472, and Asn783. The SUEL-type lectin domain occupies 750 to 837 (GGLKPTAVLS…GTLAVQAKCS (88 aa)).

The protein belongs to the glycosyl hydrolase 35 family.

The protein localises to the secreted. It is found in the extracellular space. It localises to the apoplast. The catalysed reaction is Hydrolysis of terminal non-reducing beta-D-galactose residues in beta-D-galactosides.. The chain is Beta-galactosidase 11 from Oryza sativa subsp. japonica (Rice).